The chain runs to 367 residues: DNA polymerase IV (367 aa).

One can recognise a UmuC domain in the interval isoleucine 14 to glycine 198. Mg(2+) is bound by residues aspartate 18 and aspartate 116. Residue glutamate 117 is part of the active site.

The protein belongs to the DNA polymerase type-Y family. Monomer. The cofactor is Mg(2+).

It localises to the cytoplasm. The enzyme catalyses DNA(n) + a 2'-deoxyribonucleoside 5'-triphosphate = DNA(n+1) + diphosphate. Poorly processive, error-prone DNA polymerase involved in untargeted mutagenesis. Copies undamaged DNA at stalled replication forks, which arise in vivo from mismatched or misaligned primer ends. These misaligned primers can be extended by PolIV. Exhibits no 3'-5' exonuclease (proofreading) activity. May be involved in translesional synthesis, in conjunction with the beta clamp from PolIII. This Streptococcus thermophilus (strain CNRZ 1066) protein is DNA polymerase IV.